A 156-amino-acid polypeptide reads, in one-letter code: 6,7-dimethyl-8-ribityllumazine synthase (156 aa).

5-amino-6-(D-ribitylamino)uracil-binding positions include F24, 58–60 (AFE), and 82–84 (VII). 87-88 (ST) serves as a coordination point for (2S)-2-hydroxy-3-oxobutyl phosphate. Catalysis depends on H90, which acts as the Proton donor. Residue F115 coordinates 5-amino-6-(D-ribitylamino)uracil. R129 serves as a coordination point for (2S)-2-hydroxy-3-oxobutyl phosphate.

The protein belongs to the DMRL synthase family.

It catalyses the reaction (2S)-2-hydroxy-3-oxobutyl phosphate + 5-amino-6-(D-ribitylamino)uracil = 6,7-dimethyl-8-(1-D-ribityl)lumazine + phosphate + 2 H2O + H(+). Its pathway is cofactor biosynthesis; riboflavin biosynthesis; riboflavin from 2-hydroxy-3-oxobutyl phosphate and 5-amino-6-(D-ribitylamino)uracil: step 1/2. Functionally, catalyzes the formation of 6,7-dimethyl-8-ribityllumazine by condensation of 5-amino-6-(D-ribitylamino)uracil with 3,4-dihydroxy-2-butanone 4-phosphate. This is the penultimate step in the biosynthesis of riboflavin. The sequence is that of 6,7-dimethyl-8-ribityllumazine synthase from Chlorobaculum parvum (strain DSM 263 / NCIMB 8327) (Chlorobium vibrioforme subsp. thiosulfatophilum).